The following is a 438-amino-acid chain: Methylenetetrahydrofolate--tRNA-(uracil-5-)-methyltransferase TrmFO (438 aa).

Position 10-15 (10-15 (GGGLAG)) interacts with FAD.

This sequence belongs to the MnmG family. TrmFO subfamily. Requires FAD as cofactor.

It is found in the cytoplasm. It carries out the reaction uridine(54) in tRNA + (6R)-5,10-methylene-5,6,7,8-tetrahydrofolate + NADH + H(+) = 5-methyluridine(54) in tRNA + (6S)-5,6,7,8-tetrahydrofolate + NAD(+). It catalyses the reaction uridine(54) in tRNA + (6R)-5,10-methylene-5,6,7,8-tetrahydrofolate + NADPH + H(+) = 5-methyluridine(54) in tRNA + (6S)-5,6,7,8-tetrahydrofolate + NADP(+). In terms of biological role, catalyzes the folate-dependent formation of 5-methyl-uridine at position 54 (M-5-U54) in all tRNAs. The polypeptide is Methylenetetrahydrofolate--tRNA-(uracil-5-)-methyltransferase TrmFO (Trichormus variabilis (strain ATCC 29413 / PCC 7937) (Anabaena variabilis)).